Here is a 505-residue protein sequence, read N- to C-terminus: ATP synthase subunit alpha, chloroplastic (505 aa).

Position 170-177 (170-177 (GDRQTGKT)) interacts with ATP.

Belongs to the ATPase alpha/beta chains family. In terms of assembly, F-type ATPases have 2 components, CF(1) - the catalytic core - and CF(0) - the membrane proton channel. CF(1) has five subunits: alpha(3), beta(3), gamma(1), delta(1), epsilon(1). CF(0) has four main subunits: a, b, b' and c.

The protein localises to the plastid. Its subcellular location is the chloroplast thylakoid membrane. The enzyme catalyses ATP + H2O + 4 H(+)(in) = ADP + phosphate + 5 H(+)(out). Produces ATP from ADP in the presence of a proton gradient across the membrane. The alpha chain is a regulatory subunit. The chain is ATP synthase subunit alpha, chloroplastic from Oenothera biennis (German evening primrose).